Consider the following 483-residue polypeptide: Glutamyl-tRNA(Gln) amidotransferase subunit A (483 aa).

Catalysis depends on charge relay system residues Lys-76 and Ser-151. Ser-175 serves as the catalytic Acyl-ester intermediate.

This sequence belongs to the amidase family. GatA subfamily. In terms of assembly, heterotrimer of A, B and C subunits.

The enzyme catalyses L-glutamyl-tRNA(Gln) + L-glutamine + ATP + H2O = L-glutaminyl-tRNA(Gln) + L-glutamate + ADP + phosphate + H(+). Its function is as follows. Allows the formation of correctly charged Gln-tRNA(Gln) through the transamidation of misacylated Glu-tRNA(Gln) in organisms which lack glutaminyl-tRNA synthetase. The reaction takes place in the presence of glutamine and ATP through an activated gamma-phospho-Glu-tRNA(Gln). This Pseudomonas putida (strain ATCC 700007 / DSM 6899 / JCM 31910 / BCRC 17059 / LMG 24140 / F1) protein is Glutamyl-tRNA(Gln) amidotransferase subunit A.